The chain runs to 318 residues: Probable serine/threonine-protein kinase MRK1 homolog (318 aa).

The Protein kinase domain maps to 40 to 313; it reads YRYVEMIGRG…ASELLRKQFF (274 aa). ATP-binding positions include 46 to 54 and Lys68; that span reads IGRGSFGVV. Asp159 functions as the Proton acceptor in the catalytic mechanism.

This sequence belongs to the protein kinase superfamily. CMGC Ser/Thr protein kinase family. GSK-3 subfamily.

The protein localises to the cytoplasm. It is found in the nucleus. It catalyses the reaction L-seryl-[protein] + ATP = O-phospho-L-seryl-[protein] + ADP + H(+). It carries out the reaction L-threonyl-[protein] + ATP = O-phospho-L-threonyl-[protein] + ADP + H(+). In terms of biological role, may play a role in the initiation and completion of mitosis. The chain is Probable serine/threonine-protein kinase MRK1 homolog (MRK1) from Encephalitozoon cuniculi (strain GB-M1) (Microsporidian parasite).